Reading from the N-terminus, the 230-residue chain is Thiamine-triphosphatase (230 aa).

At A2 the chain carries N-acetylalanine. The CYTH domain maps to 5 to 201 (LIEVERKFLP…AKLIVYLQRF (197 aa)). 2 residues coordinate Mg(2+): E7 and E9. 5 residues coordinate substrate: K11, R55, R57, K65, and R125. D145, E157, and E159 together coordinate Mg(2+). E157 contacts substrate. K193 contributes to the substrate binding site.

This sequence belongs to the ThTPase family. Monomer. The cofactor is Mg(2+). As to expression, widely expressed but at a low level.

Its subcellular location is the cytoplasm. The catalysed reaction is thiamine triphosphate + H2O = thiamine diphosphate + phosphate + H(+). Functionally, hydrolase highly specific for thiamine triphosphate (ThTP). The polypeptide is Thiamine-triphosphatase (THTPA) (Homo sapiens (Human)).